A 168-amino-acid chain; its full sequence is Large ribosomal subunit protein uL10 (168 aa).

Belongs to the universal ribosomal protein uL10 family. In terms of assembly, part of the ribosomal stalk of the 50S ribosomal subunit. The N-terminus interacts with L11 and the large rRNA to form the base of the stalk. The C-terminus forms an elongated spine to which L12 dimers bind in a sequential fashion forming a multimeric L10(L12)X complex.

In terms of biological role, forms part of the ribosomal stalk, playing a central role in the interaction of the ribosome with GTP-bound translation factors. This is Large ribosomal subunit protein uL10 (rplJ) from Mycoplasmopsis pulmonis (strain UAB CTIP) (Mycoplasma pulmonis).